Reading from the N-terminus, the 401-residue chain is 1-deoxy-D-xylulose 5-phosphate reductoisomerase (401 aa).

NADPH is bound by residues T11, G12, S13, I14, R38, N39, and N125. 1-deoxy-D-xylulose 5-phosphate is bound at residue K126. E127 contacts NADPH. A Mn(2+)-binding site is contributed by D151. Residues S152, E153, S179, and H202 each contribute to the 1-deoxy-D-xylulose 5-phosphate site. E153 is a Mn(2+) binding site. G208 contributes to the NADPH binding site. 1-deoxy-D-xylulose 5-phosphate is bound by residues S215, N220, K221, and E224. Residue E224 coordinates Mn(2+).

It belongs to the DXR family. Mg(2+) is required as a cofactor. Mn(2+) serves as cofactor.

The catalysed reaction is 2-C-methyl-D-erythritol 4-phosphate + NADP(+) = 1-deoxy-D-xylulose 5-phosphate + NADPH + H(+). Its pathway is isoprenoid biosynthesis; isopentenyl diphosphate biosynthesis via DXP pathway; isopentenyl diphosphate from 1-deoxy-D-xylulose 5-phosphate: step 1/6. In terms of biological role, catalyzes the NADPH-dependent rearrangement and reduction of 1-deoxy-D-xylulose-5-phosphate (DXP) to 2-C-methyl-D-erythritol 4-phosphate (MEP). This Paraburkholderia phymatum (strain DSM 17167 / CIP 108236 / LMG 21445 / STM815) (Burkholderia phymatum) protein is 1-deoxy-D-xylulose 5-phosphate reductoisomerase.